Consider the following 146-residue polypeptide: MKKMRKQTGFTLLEVMVVVVILGILASFVVPNLLGNKEKADQQKAVTDIVALENALDMYKLDNSVYPTTDQGLEALVTKPTNPEPRNYREGGYIKRLPKDPWGNDYQYLSPGDKGTIDVFTLGADGQEGGEGTGADIGNWNIQDFQ.

A propeptide spans 1–9 (leader sequence); sequence MKKMRKQTG. F10 carries the post-translational modification N-methylphenylalanine. The chain crosses the membrane as a helical span at residues 10-30; that stretch reads FTLLEVMVVVVILGILASFVV.

It belongs to the GSP G family. As to quaternary structure, type II secretion system is composed of four main components: the outer membrane complex, the inner membrane complex, the cytoplasmic secretion ATPase and the periplasm-spanning pseudopilus. Forms homomultimers. Interacts with EspL. Post-translationally, cleaved by the prepilin peptidase. In terms of processing, methylated by prepilin peptidase at the amino group of the N-terminal phenylalanine once the leader sequence is cleaved.

It localises to the cell inner membrane. In terms of biological role, core component of the type II secretion system required for the energy-dependent secretion of extracellular factors such as proteases and toxins from the periplasm. Pseudopilin (pilin-like) protein that polymerizes to form the pseudopilus. Further polymerization triggers pseudopilus growth. This chain is Type II secretion system core protein G (epsG), found in Vibrio cholerae serotype O1 (strain ATCC 39315 / El Tor Inaba N16961).